Consider the following 119-residue polypeptide: Ribosome-binding factor A (119 aa).

The protein belongs to the RbfA family. As to quaternary structure, monomer. Binds 30S ribosomal subunits, but not 50S ribosomal subunits or 70S ribosomes.

The protein localises to the cytoplasm. One of several proteins that assist in the late maturation steps of the functional core of the 30S ribosomal subunit. Associates with free 30S ribosomal subunits (but not with 30S subunits that are part of 70S ribosomes or polysomes). Required for efficient processing of 16S rRNA. May interact with the 5'-terminal helix region of 16S rRNA. The polypeptide is Ribosome-binding factor A (Coxiella burnetii (strain CbuK_Q154) (Coxiella burnetii (strain Q154))).